Consider the following 1010-residue polypeptide: Retinoblastoma-related protein 1 (1010 aa).

Residues 1–23 are disordered; sequence MEGAAPPASSGSEVTGAGSGKVD. Residues 419 to 619 form a domain A region; sequence TPVSTAMTTA…EKGSSMYNSL (201 aa). A pocket region spans residues 419–861; it reads TPVSTAMTTA…NEVFIPTVKP (443 aa). Positions 620–730 are spacer; that stretch reads IVARPTLSAE…PAAGGELCAE (111 aa). The segment at 657 to 679 is disordered; that stretch reads LPPLPFQKQEHSPDKDEVRSPKR. Residues 664-679 show a composition bias toward basic and acidic residues; sequence KQEHSPDKDEVRSPKR. Positions 731 to 861 are domain B; that stretch reads TGIGVFLSKI…NEVFIPTVKP (131 aa). Residues 868 to 898 are disordered; it reads SGTSPNKKNEEKCAADGPYPESPRLSRFPNL.

The protein belongs to the retinoblastoma protein (RB) family.

Its subcellular location is the nucleus. Functionally, regulator of biological processes that recruits a histone deacetylase to control gene transcription. May play a role in the entry into mitosis, negatively regulating the cell proliferation. Formation of stable complexes with geminiviridae replication-associated proteins may create a cellular environment which favors viral DNA replication. The sequence is that of Retinoblastoma-related protein 1 (RBR1) from Oryza sativa subsp. indica (Rice).